The primary structure comprises 641 residues: Frizzled-1 (641 aa).

An N-terminal signal peptide occupies residues 1–68 (MAEEAVPSES…WLLEAPLLLG (68 aa)). Residues 69 to 316 (VRAQPAGQVS…PEELRFSRTW (248 aa)) are Extracellular-facing. The disordered stretch occupies residues 74–99 (AGQVSGPGQQRPPPPQPQQGGQQYNG). Residues 106-224 (PDHGYCQPIS…HGAGELCVGQ (119 aa)) enclose the FZ domain. 5 cysteine pairs are disulfide-bonded: Cys111–Cys172, Cys119–Cys165, Cys156–Cys192, Cys182–Cys221, and Cys186–Cys209. N-linked (GlcNAc...) asparagine glycosylation is present at Asn125. Asn225 is a glycosylation site (N-linked (GlcNAc...) asparagine). A helical membrane pass occupies residues 317 to 337 (IGIWSVLCCASTLFTVLTYLV). Residues 338–348 (DMRRFSYPERP) lie on the Cytoplasmic side of the membrane. The helical transmembrane segment at 349–369 (IIFLSGCYTAVAVAYIAGFLL) threads the bilayer. Over 370-396 (EDRVVCNDKFAEDGARTVAQGTKKEGC) the chain is Extracellular. A helical membrane pass occupies residues 397–417 (TILFMMLYFFSMASSIWWVIL). Residues 418-439 (SLTWFLAAGMKWGHEAIEANSQ) are Cytoplasmic-facing. Residues 440-460 (YFHLAAWAVPAIKTITILALG) form a helical membrane-spanning segment. At 461-483 (QVDGDVLSGVCFVGLNNVDALRG) the chain is on the extracellular side. Residues 484–504 (FVLAPLFVYLFIGTSFLLAGF) traverse the membrane as a helical segment. Residues 505 to 530 (VSLFRIRTIMKHDGTKTEKLEKLMVR) lie on the Cytoplasmic side of the membrane. Residues 531–551 (IGVFSVLYTVPATIVIACYFY) form a helical membrane-spanning segment. Residues 552–595 (EQAFRDQWERSWVAQSCKSYAIPCPHLQGGGGVPPHPPMSPDFT) lie on the Extracellular side of the membrane. The helical transmembrane segment at 596-616 (VFMIKYLMTLIVGITSGFWIW) threads the bilayer. Over 617-641 (SGKTLNSWRKFYTRLTNSKQGETTV) the chain is Cytoplasmic. The short motif at 619 to 624 (KTLNSW) is the Lys-Thr-X-X-X-Trp motif, mediates interaction with the PDZ domain of Dvl family members element. A PDZ-binding motif is present at residues 639–641 (TTV).

It belongs to the G-protein coupled receptor Fz/Smo family. Interacts with MYOC. Interacts with WNT7B. Post-translationally, ubiquitinated by ZNRF3, leading to its degradation by the proteasome. As to expression, widely expressed. Most abundant in kidney, liver, uterus, ovary and heart. Lower levels seen in brain and intestine. Extremely low in calvaria, mammary glands and testis.

Its subcellular location is the cell membrane. Functionally, receptor for Wnt proteins. Activated by WNT3A, WNT3, WNT1 and to a lesser extent WNT2, but apparently not by WNT4, WNT5A, WNT5B, WNT6 or WNT7A. Contradictory results have been reported for activation by WNT7B. Functions in the canonical Wnt/beta-catenin signaling pathway. The canonical Wnt/beta-catenin signaling pathway leads to the activation of disheveled proteins, inhibition of GSK-3 kinase, nuclear accumulation of beta-catenin and activation of Wnt target genes. A second signaling pathway involving PKC and calcium fluxes has been seen for some family members, but it is not yet clear if it represents a distinct pathway or if it can be integrated in the canonical pathway, as PKC seems to be required for Wnt-mediated inactivation of GSK-3 kinase. Both pathways seem to involve interactions with G-proteins. May be involved in transduction and intercellular transmission of polarity information during tissue morphogenesis and/or in differentiated tissues. In Rattus norvegicus (Rat), this protein is Frizzled-1 (Fzd1).